A 185-amino-acid polypeptide reads, in one-letter code: Peptide deformylase (185 aa).

2 residues coordinate Fe cation: cysteine 109 and histidine 152. Residue glutamate 153 is part of the active site. Residue histidine 156 coordinates Fe cation.

The protein belongs to the polypeptide deformylase family. The cofactor is Fe(2+).

It catalyses the reaction N-terminal N-formyl-L-methionyl-[peptide] + H2O = N-terminal L-methionyl-[peptide] + formate. Functionally, removes the formyl group from the N-terminal Met of newly synthesized proteins. Requires at least a dipeptide for an efficient rate of reaction. N-terminal L-methionine is a prerequisite for activity but the enzyme has broad specificity at other positions. The protein is Peptide deformylase of Roseiflexus sp. (strain RS-1).